The following is a 342-amino-acid chain: Isopentenyl-diphosphate delta-isomerase (342 aa).

Residue 11-12 participates in substrate binding; that stretch reads RK. FMN contacts are provided by residues serine 68, 69-71, serine 99, and asparagine 127; that span reads SMT. Substrate is bound at residue 99–101; that stretch reads SMR. Substrate is bound at residue glutamine 162. Glutamate 163 is a Mg(2+) binding site. FMN is bound by residues lysine 194, threonine 224, 274–276, and 295–296; these read GFK and AG.

Belongs to the IPP isomerase type 2 family. Homooctamer. Dimer of tetramers. The cofactor is FMN. Requires NADPH as cofactor. Mg(2+) is required as a cofactor.

The protein resides in the cytoplasm. It carries out the reaction isopentenyl diphosphate = dimethylallyl diphosphate. Functionally, involved in the biosynthesis of isoprenoids. Catalyzes the 1,3-allylic rearrangement of the homoallylic substrate isopentenyl (IPP) to its allylic isomer, dimethylallyl diphosphate (DMAPP). This chain is Isopentenyl-diphosphate delta-isomerase, found in Rickettsia conorii (strain ATCC VR-613 / Malish 7).